Consider the following 425-residue polypeptide: MMNKDITAQSPRSKAVQDALDGKIRGFRGLLPFLGPAFIAAIAYIDPGNFATNISAGSKYGYMLLWVILFSNIMALLIQSLSAKLGIATGKNLPEVAREEFPKPVSIGLWIQGELVIIATDLAEFIGAALGLYLLFGIPMLEASIIAAIGSFAILELQRRGYRSLEAGIAGMLFVVVIAFALQTFFAKPDAVSVMKGLFVPAFHGTDSVLLAAGILGATVMPHAIYLHSALTQRRVVGKTDAERKKIFRFEFIDILIAMLIAGAINASMLIVAAALFFKNGLFVEDLDVAFQQFGHLVSPMSAALFGIGLLVAGLSSSSVGTLSGDVIMQGFINYRIPLYVRRFITIIPPILIIASGVNPTTALVLSQVVLSFGIAFALIPLIMFTSNKRIMGSLINAKWITVVSWLIAVLIVALNVFLIVDTFR.

11 helical membrane passes run 30–50 (LLPF…PGNF), 61–81 (GYML…IQSL), 107–127 (IGLW…EFIG), 134–154 (LLFG…SFAI), 167–187 (AGIA…TFFA), 209–231 (VLLA…HSAL), 255–275 (ILIA…VAAA), 294–314 (FGHL…LVAG), 344–364 (FITI…TTAL), 365–385 (VLSQ…LIMF), and 401–421 (ITVV…FLIV).

It belongs to the NRAMP family.

It localises to the cell membrane. Functionally, h(+)-stimulated, divalent metal cation uptake system. Involved in manganese uptake. Can probably also transport cadmium, cobalt, copper and zinc, but not iron. May be the predominant transporter of manganese during logarithmic phase growth. The polypeptide is Divalent metal cation transporter MntH (Bacillus subtilis (strain 168)).